Reading from the N-terminus, the 44-residue chain is Capsid protein G8P (44 aa).

Serine 1 carries the N-acetylserine; by host modification. The Periplasmic portion of the chain corresponds to 1-19 (SGVGDGVDVVSAIEGAAGP). A helical membrane pass occupies residues 20 to 37 (IAAIGGAVLTVMVGIKVY). The Cytoplasmic segment spans residues 38–44 (KWVRRAM).

This sequence belongs to the inovirus capsid protein family. In terms of assembly, homomultimerizes. There are several thousands of this protein in the phage capsid.

Its subcellular location is the virion. It localises to the host membrane. Functionally, self assembles to form a helical capsid wrapping up the viral genomic DNA. The capsid displays a filamentous structure with a length of 760-1950 nm and a width of 6-8 nm. The virion assembly and budding take place at the host inner membrane. This Xanthomonas campestris pv. oryzae (Bacteriophage Xf) protein is Capsid protein G8P (VIII).